The sequence spans 118 residues: GRB2-related adapter protein-like (118 aa).

Residues 1-58 (MESVALYSFQATESDELAFNKGDTLKILNMEDDQNWYKAELRGVEGFIPKNYIRVKPH) enclose the SH3 domain. In terms of domain architecture, SH2 spans 60–118 (WYSGRISRQLAEEILMKRNHLGAFLIRESESSPGEFSVSVNNRAQRGPCLGPKSHSRLG). Residues 89-118 (ESSPGEFSVSVNNRAQRGPCLGPKSHSRLG) are disordered. Over residues 90–103 (SSPGEFSVSVNNRA) the composition is skewed to polar residues.

The protein belongs to the GRB2/sem-5/DRK family.

The chain is GRB2-related adapter protein-like (GRAPL) from Homo sapiens (Human).